The sequence spans 701 residues: C6 finger domain transcription factor nscR (701 aa).

The segment at residues 17-43 (CELCRERKVKCDKLDPCTNCASAGVVC) is a DNA-binding region (zn(2)-C6 fungal-type).

Its subcellular location is the nucleus. Functionally, transcription factor that specifically regulates the neosartoricin B biosynthesis gene cluster. The protein is C6 finger domain transcription factor nscR of Arthroderma gypseum (strain ATCC MYA-4604 / CBS 118893) (Microsporum gypseum).